The following is a 369-amino-acid chain: Phospho-N-acetylmuramoyl-pentapeptide-transferase (369 aa).

The next 10 membrane-spanning stretches (helical) occupy residues 30 to 50, 73 to 93, 99 to 119, 140 to 160, 171 to 191, 202 to 222, 239 to 259, 266 to 286, 291 to 311, and 346 to 366; these read AAAITSLLITILAGPKLIGYL, LPTMGGTLIIFSVVVSGLLWA, YVWLILLSILWMGTIGFIDDY, VSLGLFIGFYTRFDPAFSVLL, LMIDYGWWYIPVVVFIITAVS, GLAAGTSGIVVFGLGGFAYLT, GGEVAVVSMAIVMACVGFLWF, IFMGDTGSLALGSAIAVIALL, LLLPVLAGTFLLETLSVSLQV, and KIVIRFWIITLLFFLASLMTL.

It belongs to the glycosyltransferase 4 family. MraY subfamily. It depends on Mg(2+) as a cofactor.

Its subcellular location is the cell inner membrane. It catalyses the reaction UDP-N-acetyl-alpha-D-muramoyl-L-alanyl-gamma-D-glutamyl-meso-2,6-diaminopimeloyl-D-alanyl-D-alanine + di-trans,octa-cis-undecaprenyl phosphate = di-trans,octa-cis-undecaprenyl diphospho-N-acetyl-alpha-D-muramoyl-L-alanyl-D-glutamyl-meso-2,6-diaminopimeloyl-D-alanyl-D-alanine + UMP. It participates in cell wall biogenesis; peptidoglycan biosynthesis. Functionally, catalyzes the initial step of the lipid cycle reactions in the biosynthesis of the cell wall peptidoglycan: transfers peptidoglycan precursor phospho-MurNAc-pentapeptide from UDP-MurNAc-pentapeptide onto the lipid carrier undecaprenyl phosphate, yielding undecaprenyl-pyrophosphoryl-MurNAc-pentapeptide, known as lipid I. The protein is Phospho-N-acetylmuramoyl-pentapeptide-transferase of Chlorobium phaeobacteroides (strain BS1).